The sequence spans 371 residues: tRNA-specific 2-thiouridylase MnmA (371 aa).

ATP contacts are provided by residues 22–29 (GLSGGVDS) and M48. The segment at 108–110 (NPD) is interaction with target base in tRNA. C113 serves as the catalytic Nucleophile. A disulfide bond links C113 and C209. G137 is an ATP binding site. The tract at residues 159 to 161 (KDQ) is interaction with tRNA. C209 functions as the Cysteine persulfide intermediate in the catalytic mechanism.

It belongs to the MnmA/TRMU family.

It localises to the cytoplasm. The catalysed reaction is S-sulfanyl-L-cysteinyl-[protein] + uridine(34) in tRNA + AH2 + ATP = 2-thiouridine(34) in tRNA + L-cysteinyl-[protein] + A + AMP + diphosphate + H(+). Catalyzes the 2-thiolation of uridine at the wobble position (U34) of tRNA, leading to the formation of s(2)U34. The chain is tRNA-specific 2-thiouridylase MnmA from Coxiella burnetii (strain CbuG_Q212) (Coxiella burnetii (strain Q212)).